The following is a 397-amino-acid chain: Argininosuccinate synthase (397 aa).

8 to 16 lines the ATP pocket; sequence AYSGGLDTS. L-citrulline is bound by residues Tyr86 and Ser91. ATP is bound at residue Gly116. 3 residues coordinate L-aspartate: Thr118, Asn122, and Asp123. Asn122 is a binding site for L-citrulline. Residues Arg126, Ser175, Ser184, Glu260, and Tyr272 each coordinate L-citrulline.

The protein belongs to the argininosuccinate synthase family. Type 1 subfamily. Homotetramer.

The protein resides in the cytoplasm. It carries out the reaction L-citrulline + L-aspartate + ATP = 2-(N(omega)-L-arginino)succinate + AMP + diphosphate + H(+). Its pathway is amino-acid biosynthesis; L-arginine biosynthesis; L-arginine from L-ornithine and carbamoyl phosphate: step 2/3. The chain is Argininosuccinate synthase from Clostridium botulinum (strain Okra / Type B1).